Consider the following 349-residue polypeptide: Ferredoxin--NADP reductase (349 aa).

FAD is bound by residues Asp43, Gln51, Tyr56, Val96, Phe131, Asp295, and Ser336.

It belongs to the ferredoxin--NADP reductase type 2 family. As to quaternary structure, homodimer. FAD is required as a cofactor.

It catalyses the reaction 2 reduced [2Fe-2S]-[ferredoxin] + NADP(+) + H(+) = 2 oxidized [2Fe-2S]-[ferredoxin] + NADPH. The chain is Ferredoxin--NADP reductase from Paraburkholderia phytofirmans (strain DSM 17436 / LMG 22146 / PsJN) (Burkholderia phytofirmans).